An 845-amino-acid chain; its full sequence is Beta-mannosidase B (845 aa).

Asn-252 carries an N-linked (GlcNAc...) asparagine glycan. The active-site Proton donor is the Glu-432. Asn-717 and Asn-723 each carry an N-linked (GlcNAc...) asparagine glycan.

This sequence belongs to the glycosyl hydrolase 2 family. Beta-mannosidase B subfamily.

It carries out the reaction Hydrolysis of terminal, non-reducing beta-D-mannose residues in beta-D-mannosides.. It participates in glycan metabolism; N-glycan degradation. Exoglycosidase that cleaves the single beta-linked mannose residue from the non-reducing end of beta-mannosidic oligosaccharides of various complexity and length. Prefers mannobiose over mannotriose and has no activity against polymeric mannan. Is also severely restricted by galactosyl substitutions at the +1 subsite. The sequence is that of Beta-mannosidase B (mndB) from Aspergillus fumigatus (strain ATCC MYA-4609 / CBS 101355 / FGSC A1100 / Af293) (Neosartorya fumigata).